We begin with the raw amino-acid sequence, 552 residues long: Acyl-CoA-dependent acyltransferase MAC1 (552 aa).

It belongs to the trichothecene O-acetyltransferase family.

It functions in the pathway secondary metabolite biosynthesis. Its function is as follows. Acyl-CoA-dependent acyltransferase; part of the gene cluster that mediates the biosynthesis of mannosylerythritol lipids (MELs), surface-active substances that enhance the availability of water-insoluble substrates. Depending on the number of acetyl groups, mannosylerythritol lipids can be differentiated into MEL A (fully acetylated), MEL B and MEL C (monoacetylated at R-6 and R-4, respectively), and the fully deacetylated MEL D. The first step in the pathway is the generation of mannosylerythritol by the glycosyltransferase EMT1 which catalyzes the transfer of GDP-mannose to the C-4 atom of meso-erythritol. This reaction has to be stereospecific, since only mannosyl-D-erythritol is generated. The produced disaccharide is subsequently acylated with fatty acids of various lengths by the acyltransferases MAC1 and MAC2 at positions C-2 and C-3, repectively. The existence of MEL derivatives which carry an acetyl group at C-2 implies that at least MAC1 also accepts acetyl-CoA as a donor. The final step of MEL biosynthesis is the acetylation of the fully acylated mannosylerythritol lipids catalyzed by the acetyl-CoA-dependent acetyltransferase MAT1. MAT1 displays a relaxed regioselectivity and is able to transfer acetylgroups to both positions C-4 and C-6 of the mannosyl moiety. In Pseudozyma antarctica (strain T-34) (Yeast), this protein is Acyl-CoA-dependent acyltransferase MAC1.